The sequence spans 360 residues: Cannabinoid receptor 2 (360 aa).

Topologically, residues 1–33 (MAGCRELELTNGSNGGLEFNPMKEYMILSDAQQ) are extracellular. N-linked (GlcNAc...) asparagine glycosylation is present at Asn11. Residues 34–59 (IAVAVLCTLMGLLSALENVAVLYLIL) traverse the membrane as a helical segment. The Cytoplasmic segment spans residues 60-71 (SSQRLRRKPSYL). A helical transmembrane segment spans residues 72–92 (FIGSLAGADFLASVIFACNFV). Residues 93–104 (IFHVFHGVDSRN) lie on the Extracellular side of the membrane. A helical transmembrane segment spans residues 105-129 (IFLLKIGSVTMTFTASVGSLLLTAV). Topologically, residues 130–149 (DRYLCLCYPPTYKALVTRGR) are cytoplasmic. Residues 150–172 (ALVALGVMWVLSALISYLPLMGW) form a helical membrane-spanning segment. Residues 173 to 188 (TCCPSPCSELFPLIPN) are Extracellular-facing. A helical transmembrane segment spans residues 189–214 (DYLLGWLLFIAILFSGIIYTYGYVLW). Residues 215–246 (KAHQHVASLAEHQDRQVPGIARMRLDVRLAKT) lie on the Cytoplasmic side of the membrane. The chain crosses the membrane as a helical span at residues 247 to 267 (LGLVMAVLLICWFPALALMGH). Residues 268 to 279 (SLVTTLSDKVKE) lie on the Extracellular side of the membrane. A helical transmembrane segment spans residues 280–301 (AFAFCSMLCLVNSMINPIIYAL). Residues 302-360 (RSGEIRSAAQHCLTGWKKYLQGLGSEGKEEAPKSSVTETEAEVKTTTGPGSRTPGCSNC) are Cytoplasmic-facing. The disordered stretch occupies residues 327 to 360 (EGKEEAPKSSVTETEAEVKTTTGPGSRTPGCSNC). Residues Ser335 and Ser336 each carry the phosphoserine modification. A Phosphothreonine modification is found at Thr338. The segment covering 349–360 (GPGSRTPGCSNC) has biased composition (polar residues). The residue at position 352 (Ser352) is a Phosphoserine.

This sequence belongs to the G-protein coupled receptor 1 family. Constitutively phosphorylated on Ser-352; phosphorylation increases cell internalization and desensitizes the receptor. In terms of tissue distribution, expressed in spleen and brain by neurons and glial cells (at protein level). Expressed in lung, testis and thymus but not in heart, liver or kidney. Expressed in cerebellum, cortex and brainstem.

It is found in the cell membrane. It localises to the cell projection. The protein localises to the dendrite. Its subcellular location is the perikaryon. Its function is as follows. Heterotrimeric G protein-coupled receptor for endocannabinoid 2-arachidonoylglycerol mediating inhibition of adenylate cyclase. May function in inflammatory response, nociceptive transmission and bone homeostasis. This Rattus norvegicus (Rat) protein is Cannabinoid receptor 2 (Cnr2).